Here is a 61-residue protein sequence, read N- to C-terminus: MALKITQVKGLVGTKPKQRDSMRSLGLKRIGQTVVREDNPIVRGQINTVRHMVEVEEVAGE.

It belongs to the universal ribosomal protein uL30 family. Part of the 50S ribosomal subunit.

This Corynebacterium jeikeium (strain K411) protein is Large ribosomal subunit protein uL30.